A 329-amino-acid chain; its full sequence is Flotillin-like protein FloA (329 aa).

2 helical membrane-spanning segments follow: residues 6-26 (FIVI…FVPI) and 27-47 (GLWI…LVGM).

The protein belongs to the flotillin-like FloA family. In terms of assembly, homooligomerizes.

The protein resides in the cell membrane. Its subcellular location is the membrane raft. Its function is as follows. Found in functional membrane microdomains (FMM) that may be equivalent to eukaryotic membrane rafts. FMMs are highly dynamic and increase in number as cells age. Flotillins are thought to be important factors in membrane fluidity. The chain is Flotillin-like protein FloA from Staphylococcus aureus (strain USA300).